A 372-amino-acid polypeptide reads, in one-letter code: Alpha-1-antitrypsin homolog (372 aa).

The N-terminal stretch at M1–R19 is a signal peptide. Residues N214 and N226 are each glycosylated (N-linked (GlcNAc...) asparagine). The RCL stretch occupies residues A328–R347.

This sequence belongs to the serpin family.

The protein localises to the secreted. This chain is Alpha-1-antitrypsin homolog, found in Cyprinus carpio (Common carp).